Here is a 1462-residue protein sequence, read N- to C-terminus: Gag-Pro-Pol polyprotein (1462 aa).

Gly-2 is lipidated: N-myristoyl glycine; by host. The segment at 93–143 (QIPSHPAPPPPSSPTHDPPDSDPQIPPPYVEPTAPQVLPVMHPHGVPPTHR) is disordered. Position 105 is a phosphoserine; by host MAPK1 (Ser-105). The PPXY motif motif lies at 118-121 (PPPY). The PTAP/PSAP motif motif lies at 124–127 (PTAP). 2 CCHC-type zinc fingers span residues 355–372 (QPCF…DCAQ) and 378–395 (GPCP…DCPR). A Peptidase A2 domain is found at 476–554 (IEALLDTGAD…NNWAIIGRDA (79 aa)). The For protease activity; shared with dimeric partner role is filled by Asp-481. One can recognise a Reverse transcriptase domain in the interval 614–804 (LEAGHIEPYT…GTIKFLGQII (191 aa)). Positions 680, 755, 756, 1040, 1074, 1096, 1157, 1230, and 1287 each coordinate Mg(2+). In terms of domain architecture, RNase H type-1 spans 1031–1165 (INTAPCLFSD…TDALLITPIL (135 aa)). The 170-residue stretch at 1219–1388 (RGLLPNHIWQ…QPIPETHSLI (170 aa)) folds into the Integrase catalytic domain. The segment at residues 1393–1443 (HWYYFKLPGLNSRQWKGPQEALQEAAGAALIPVSANSAQWIPWRLLKQAAC) is a DNA-binding region (integrase-type).

As to quaternary structure, homodimer; the homodimers are part of the immature particles. Interacts with human TSG101 and NEDD4; these interactions are essential for budding and release of viral particles. Homodimer; further assembles as homohexamers. It depends on Mg(2+) as a cofactor. Phosphorylation of the matrix protein p19 by MAPK1 seems to play a role in budding. In terms of processing, myristoylated. Myristoylation of the matrix (MA) domain mediates the transport and binding of Gag polyproteins to the host plasma membrane and is required for the assembly of viral particles. Post-translationally, specific enzymatic cleavages by the viral protease yield mature proteins. The polyprotein is cleaved during and after budding, this process is termed maturation. The protease is autoproteolytically processed at its N- and C-termini.

The protein localises to the virion. It catalyses the reaction Endonucleolytic cleavage to 5'-phosphomonoester.. The enzyme catalyses DNA(n) + a 2'-deoxyribonucleoside 5'-triphosphate = DNA(n+1) + diphosphate. In terms of biological role, the matrix domain targets Gag, Gag-Pro and Gag-Pro-Pol polyproteins to the plasma membrane via a multipartite membrane binding signal, that includes its myristoylated N-terminus. Its function is as follows. Matrix protein. Functionally, forms the spherical core of the virus that encapsulates the genomic RNA-nucleocapsid complex. Binds strongly to viral nucleic acids and promote their aggregation. Also destabilizes the nucleic acids duplexes via highly structured zinc-binding motifs. In terms of biological role, the aspartyl protease mediates proteolytic cleavages of Gag and Gag-Pol polyproteins during or shortly after the release of the virion from the plasma membrane. Cleavages take place as an ordered, step-wise cascade to yield mature proteins. This process is called maturation. Displays maximal activity during the budding process just prior to particle release from the cell (Potential). Cleaves the translation initiation factor eIF4G leading to the inhibition of host cap-dependent translation. Its function is as follows. RT is a multifunctional enzyme that converts the viral RNA genome into dsDNA in the cytoplasm, shortly after virus entry into the cell. This enzyme displays a DNA polymerase activity that can copy either DNA or RNA templates, and a ribonuclease H (RNase H) activity that cleaves the RNA strand of RNA-DNA heteroduplexes in a partially processive 3' to 5'-endonucleasic mode. Conversion of viral genomic RNA into dsDNA requires many steps. A tRNA-Pro binds to the primer-binding site (PBS) situated at the 5'-end of the viral RNA. RT uses the 3' end of the tRNA primer to perform a short round of RNA-dependent minus-strand DNA synthesis. The reading proceeds through the U5 region and ends after the repeated (R) region which is present at both ends of viral RNA. The portion of the RNA-DNA heteroduplex is digested by the RNase H, resulting in a ssDNA product attached to the tRNA primer. This ssDNA/tRNA hybridizes with the identical R region situated at the 3' end of viral RNA. This template exchange, known as minus-strand DNA strong stop transfer, can be either intra- or intermolecular. RT uses the 3' end of this newly synthesized short ssDNA to perform the RNA-dependent minus-strand DNA synthesis of the whole template. RNase H digests the RNA template except for a polypurine tract (PPT) situated at the 5' end of the genome. It is not clear if both polymerase and RNase H activities are simultaneous. RNase H probably can proceed both in a polymerase-dependent (RNA cut into small fragments by the same RT performing DNA synthesis) and a polymerase-independent mode (cleavage of remaining RNA fragments by free RTs). Secondly, RT performs DNA-directed plus-strand DNA synthesis using the PPT that has not been removed by RNase H as primer. PPT and tRNA primers are then removed by RNase H. The 3' and 5' ssDNA PBS regions hybridize to form a circular dsDNA intermediate. Strand displacement synthesis by RT to the PBS and PPT ends produces a blunt ended, linear dsDNA copy of the viral genome that includes long terminal repeats (LTRs) at both ends. Functionally, catalyzes viral DNA integration into the host chromosome, by performing a series of DNA cutting and joining reactions. This is Gag-Pro-Pol polyprotein (gag-pro-pol) from Homo sapiens (Human).